A 253-amino-acid polypeptide reads, in one-letter code: MTYMQLRSSTKKVKINEANNMAVVFEKNKPPSSIKRAELKTVLIPKPIIKKGIICGLEKYAAIYKAIAKHPLVLGKCPSRPYHTINVMTKSQNALILTPSMDINKTQHLLLKHSLLDYIGLKSNMAQFEALYGSVLEPMTSKEMLSFQDLFFETKRRTEDIIFVLNTICEHRFVHPVRASVTPQVFKDIVEKYFFLFPAKDKSNSINFAASVVEIICNGEPFSKVIQYVNAYMDIKEHTTMNNLIKIYALLTT.

This sequence belongs to the herpesviridae BTRF1 family.

This is an uncharacterized protein from Saimiriine herpesvirus 2 (strain 11) (SaHV-2).